The following is a 570-amino-acid chain: NADPH oxidase 2 (570 aa).

At 2–9 (GNWAVNEG) the chain is on the cytoplasmic side. A helical membrane pass occupies residues 10–36 (LSIFVILVWLGLNVFLFINYYKVYDDG). Residues 37–46 (PKYNYTRKLL) are Extracellular-facing. N-linked (GlcNAc...) asparagine glycosylation is present at Asn-40. A helical membrane pass occupies residues 47–72 (GSALALARAPAACLNFNCMLILLPVC). Residues 54 to 286 (RAPAACLNFN…MFLYLCERLV (233 aa)) form the Ferric oxidoreductase domain. Topologically, residues 73–95 (RNLLSFLRGSSACCSTRIRRQLD) are cytoplasmic. Residues 96-130 (RNLTFHKMVAWMIALHTAIHTIAHLFNVEWCVNAR) traverse the membrane as a helical segment. Heme b contacts are provided by His-101 and His-115. The Extracellular segment spans residues 131-163 (VGISDRYSIALSDIGDNENEEYLNFAREKIKNP). Glycyl lysine isopeptide (Lys-Gly) (interchain with G-Cter in ubiquitin) cross-links involve residues Lys-159 and Lys-161. A helical membrane pass occupies residues 164–194 (EGGLYVAVTRLAGITGIVITLCLILIITSST). Over 195–203 (KTIRRSYFE) the chain is Cytoplasmic. Arg-199 and Ser-200 together coordinate FAD. The helical transmembrane segment at 204–222 (VFWYTHHLFVIFFIGLAIH) threads the bilayer. Heme b is bound by residues Trp-206, His-209, His-222, Arg-226, and Ile-227. Residues 223–267 (GAERIVRGQTAESLEEHNLDICADKIEEWGKIKECPVPKFAGNPP) are Extracellular-facing. Lys-255 participates in a covalent cross-link: Glycyl lysine isopeptide (Lys-Gly) (interchain with G-Cter in ubiquitin). Residues Met-268, Tyr-280, and Arg-287 each coordinate heme b. Residues 268 to 285 (MTWKWIVGPMFLYLCERL) traverse the membrane as a helical segment. Topologically, residues 286 to 570 (VRFWRSQQKV…VHFIFNKENF (285 aa)) are cytoplasmic. An FAD-binding FR-type domain is found at 287-397 (RFWRSQQKVV…DGPFGTASED (111 aa)). Glycyl lysine isopeptide (Lys-Gly) (interchain with G-Cter in ubiquitin) cross-links involve residues Lys-294, Lys-299, Lys-306, Lys-328, and Lys-334. Positions 337, 338, 339, 341, 354, 356, 361, and 362 each coordinate FAD. A Glycyl lysine isopeptide (Lys-Gly) (interchain with G-Cter in ubiquitin) cross-link involves residue Lys-381. The NADPH site is built by Ile-411, Arg-446, and Thr-481. Residue Lys-506 forms a Glycyl lysine isopeptide (Lys-Gly) (interchain with G-Cter in ubiquitin) linkage. Arg-513 provides a ligand contact to NADPH. Lys-567 is covalently cross-linked (Glycyl lysine isopeptide (Lys-Gly) (interchain with G-Cter in ubiquitin)).

Component of the phagocyte NADPH oxidase core complex/cytochrome b558 complex, composed of CYBB (heavy chain (beta)) and CYBA (light chain (alpha)). Component of the phagocyte NADPH oxidase complex composed of an obligatory core heterodimer formed by the membrane proteins CYBA and CYBB and the cytosolic regulatory subunits NCF1/p47-phox, NCF2/p67-phox, NCF4/p40-phox and the small GTPase RAC1 or RAC2. Interacts with NCF1 (phosphorylated form). Interacts with NCF2; the interaction is enhanced in the presence of GBP7. Interacts with RAC2. Interacts with RAC1. Interacts with calprotectin (S100A8/9). Interacts with NRROS; the interaction is direct and impairs formation of a stable NADPH oxidase complex. Interacts with CYBC1; CYBC1 may act as a chaperone stabilizing Cytochrome b-245 heterodimer. The CYBA:CYBB complex interacts with GBP7. It depends on FAD as a cofactor. Glycosylated. In terms of processing, phosphorylated on Ser and Thr residues by PKC during neutrophils activation. Phosphorylation enhances the NADPH oxidase activity and stimulates its interaction with RAC2, NCF2/p67-phox, and NCF1/p47-phox. Post-translationally, undergoes 'Lys-48'-linked polyubiquitination, likely by RNF145, triggering endoplasmic reticulum-associated degradation.

It is found in the cell membrane. The enzyme catalyses NADPH + 2 O2 = 2 superoxide + NADP(+) + H(+). In terms of biological role, catalytic subunit of the phagocyte NADPH oxidase complex that mediates the transfer of electrons from cytosolic NADPH to O2 to produce the superoxide anion (O2(-)). In the activated complex, electrons are first transferred from NADPH to flavin adenine dinucleotide (FAD) and subsequently transferred via two heme molecules to molecular oxygen, producing superoxide through an outer-sphere reaction. Activation of the NADPH oxidase complex is initiated by the assembly of cytosolic subunits of the NADPH oxidase complex with the core NADPH oxidase complex to form a complex at the plasma membrane or phagosomal membrane. This activation process is initiated by phosphorylation dependent binding of the cytosolic NCF1/p47-phox subunit to the C-terminus of CYBA/p22-phox. NADPH oxidase complex assembly is impaired through interaction with NRROS. The sequence is that of NADPH oxidase 2 from Mus musculus (Mouse).